An 892-amino-acid polypeptide reads, in one-letter code: Putative disease resistance protein At4g10780 (892 aa).

The stretch at 24–63 (SLGNYIHKLKDNIVALEKAIEDLTATRDDVLRRVQMEEGK) forms a coiled coil. In terms of domain architecture, NB-ARC spans 137 to 440 (IVAAPAPKLE…ICEGFIDGNI (304 aa)). ATP is bound at residue 180 to 187 (GMGGVGKT). 6 LRR repeats span residues 515–536 (AVRR…PECP), 537–559 (ELTT…FFRH), 562–584 (KLVV…ISEL), 586–608 (ALRY…QDLK), 609–631 (TLIH…SKLS), and 632–654 (SLRT…KELH).

It belongs to the disease resistance NB-LRR family.

Functionally, potential disease resistance protein. The sequence is that of Putative disease resistance protein At4g10780 from Arabidopsis thaliana (Mouse-ear cress).